We begin with the raw amino-acid sequence, 488 residues long: Bifunctional protein GlmU (488 aa).

A pyrophosphorylase region spans residues 1-237 (MPRTRTPLAA…AEEASGVNDR (237 aa)). Residues 13 to 16 (LAAG), lysine 27, glutamine 82, 87 to 88 (GT), 110 to 112 (SGD), glycine 149, glutamate 164, asparagine 179, and asparagine 235 each bind UDP-N-acetyl-alpha-D-glucosamine. Aspartate 112 contributes to the Mg(2+) binding site. Asparagine 235 is a binding site for Mg(2+). Positions 238–258 (IELARANRVMVGRLAEAFMRA) are linker. An N-acetyltransferase region spans residues 259–488 (GVTIEDPARF…KGRPAARRAS (230 aa)). The UDP-N-acetyl-alpha-D-glucosamine site is built by arginine 341 and lysine 359. Histidine 371 (proton acceptor) is an active-site residue. UDP-N-acetyl-alpha-D-glucosamine-binding residues include tyrosine 374 and asparagine 385. Acetyl-CoA contacts are provided by residues alanine 388, 394-395 (NY), serine 413, alanine 431, and arginine 448. The tract at residues 459–488 (AQRQAEKQMKGTATGPAPARKGRPAARRAS) is disordered. A compositionally biased stretch (basic residues) spans 478 to 488 (RKGRPAARRAS).

This sequence in the N-terminal section; belongs to the N-acetylglucosamine-1-phosphate uridyltransferase family. In the C-terminal section; belongs to the transferase hexapeptide repeat family. In terms of assembly, homotrimer. Mg(2+) is required as a cofactor.

The protein localises to the cytoplasm. It carries out the reaction alpha-D-glucosamine 1-phosphate + acetyl-CoA = N-acetyl-alpha-D-glucosamine 1-phosphate + CoA + H(+). The enzyme catalyses N-acetyl-alpha-D-glucosamine 1-phosphate + UTP + H(+) = UDP-N-acetyl-alpha-D-glucosamine + diphosphate. The protein operates within nucleotide-sugar biosynthesis; UDP-N-acetyl-alpha-D-glucosamine biosynthesis; N-acetyl-alpha-D-glucosamine 1-phosphate from alpha-D-glucosamine 6-phosphate (route II): step 2/2. It functions in the pathway nucleotide-sugar biosynthesis; UDP-N-acetyl-alpha-D-glucosamine biosynthesis; UDP-N-acetyl-alpha-D-glucosamine from N-acetyl-alpha-D-glucosamine 1-phosphate: step 1/1. It participates in bacterial outer membrane biogenesis; LPS lipid A biosynthesis. In terms of biological role, catalyzes the last two sequential reactions in the de novo biosynthetic pathway for UDP-N-acetylglucosamine (UDP-GlcNAc). The C-terminal domain catalyzes the transfer of acetyl group from acetyl coenzyme A to glucosamine-1-phosphate (GlcN-1-P) to produce N-acetylglucosamine-1-phosphate (GlcNAc-1-P), which is converted into UDP-GlcNAc by the transfer of uridine 5-monophosphate (from uridine 5-triphosphate), a reaction catalyzed by the N-terminal domain. In Anaeromyxobacter dehalogenans (strain 2CP-C), this protein is Bifunctional protein GlmU.